Consider the following 646-residue polypeptide: MAPAVGIDLGTTYSCVGVFREDRCEIIANDQGNRTTPSFVAFTDTERLVGDAAKNQVAMNPANTVFDAKRLIGRKFSDPEVQADMKHFPFKVIDRGGKPVIQVEFKGETKVFTPEEISAMILQKMKETAEAYLGGTVNNAVVTVPAYFNDSQRQATKDAGLIAGLNVLRIINEPTAAAIAYGLDKKVEGERNVLIFDLGGGTFDVSLLTIEEGIFEVKSTAGDTHLGGEDFDNRLVNHFVQEFKRKHKKDLSTNARALRRLRTACERAKRTLSSSAQTSIEIDSLFEGIDFYTSITRARFEELCQDLFRSTLQPVDRVLTDAKIDKSQVHEIVLVGGSTRIPRIQKLISDYFNGKEPNKSINPDEAVAYGAAVQAAILSGDTSSKSTSEILLLDVAPLSLGIETAGGMMTKLIPRNTTIPTKKSEVFSTFSDNQPGVLIQVYEGERQRTKDNNLLGKFELTGIPPAPRGVPQIEVTFDVDANGIMNVSALEKGTGKTNQITITNDKGRLSKEEIERMLAEAEKFKEEDEAEAKRVAAKNGLESYAYSLRNTLSDSKVDEKLDAADKEKLKSEIDKIVAWLDENQQATREEYEERQKELEAIANPIMMKFYGAGGAPGGMPGAAPGGFPGGAPGSNDNEGPTVEEVD.

The segment covering Gly-613 to Pro-632 has biased composition (gly residues). The tract at residues Gly-613–Asp-646 is disordered.

Belongs to the heat shock protein 70 family.

The protein is Heat shock 70 kDa protein (hsps-1) of Neurospora crassa (strain ATCC 24698 / 74-OR23-1A / CBS 708.71 / DSM 1257 / FGSC 987).